A 328-amino-acid polypeptide reads, in one-letter code: Arylacetonitrilase (328 aa).

The CN hydrolase domain occupies 5–278; that stretch reads VRVAVTQAEP…EGIIYADLDL (274 aa). The active-site Proton acceptor is the glutamate 45. Lysine 125 is an active-site residue. The active-site Nucleophile is the cysteine 160.

The protein belongs to the carbon-nitrogen hydrolase superfamily. Nitrilase family.

It catalyses the reaction a nitrile + 2 H2O = a carboxylate + NH4(+). The enzyme catalyses 4-chlorophenylacetonitrile + 2 H2O = 4-chlorophenylacetate + NH4(+). Its function is as follows. Nitrilase that hydrolyzes preferentially phenylacetonitrile and (R,S)-mandelonitrile. Also acts on dinitriles like phenylenediacetonitriles (PDAs) 1,2-PDA, 1,3-PDA, and 1,4-PDA, and cyanophenyl acetonitriles (CPAs) 2-CPA and 4-CPA. This chain is Arylacetonitrilase (nit2), found in Aspergillus kawachii (strain NBRC 4308) (White koji mold).